A 1083-amino-acid polypeptide reads, in one-letter code: Histone-lysine N-methyltransferase ATX2 (1083 aa).

The Nuclear localization signal motif lies at 77–84; that stretch reads HRRPEIVH. The 65-residue stretch at 315–379 folds into the PWWP domain; sequence PRDIIWAKLT…VKQAVSFLKG (65 aa). The disordered stretch occupies residues 422 to 443; sequence TDCSERINSGEEDSSNSGDDYT. An FYR N-terminal domain is found at 457–516; the sequence is DCLHRIGDLQIINLGRIVTDSEFFKDSKHTWPEGYTATRKFISLKDPNASAMYKMEVLRD. The 85-residue stretch at 520–604 folds into the FYR C-terminal domain; it reads KTRPVFRVTT…PPSKVSQRKY (85 aa). The segment at 626-677 adopts a PHD-type 1 zinc-finger fold; sequence LDKCNVCHMDEEYENNLFLQCDKCRMMVHTRCYGQLEPHNGILWLCNLCRPV. Residues 682-715 form a C2HC pre-PHD-type zinc finger; sequence PPRCCLCPVVGGAMKPTTDGRWAHLACAIWIPET. Positions 682–807 are extended PHD domain (ePHD); the sequence is PPRCCLCPVV…RLLSFCKRHR (126 aa). The PHD-type 2 zinc-finger motif lies at 739–807; sequence LLCSICGVSY…RLLSFCKRHR (69 aa). An SET domain is found at 919 to 1037; the sequence is KRLAFGKSGI…KWEELTYDYR (119 aa). His929 provides a ligand contact to S-adenosyl-L-methionine. Ser968 is a glycosylation site (O-linked (GlcNAc) serine). S-adenosyl-L-methionine is bound by residues Tyr975 and 998 to 999; that span reads NH. Zn(2+) is bound at residue Cys1001. Tyr1036 serves as a coordination point for S-adenosyl-L-methionine. The region spanning 1043 to 1059 is the Post-SET domain; the sequence is ERLACYCGFPRCRGVVN. Positions 1047, 1049, and 1054 each coordinate Zn(2+).

The protein belongs to the class V-like SAM-binding methyltransferase superfamily. Histone-lysine methyltransferase family. TRX/MLL subfamily. Post-translationally, activated via O-glycosylation. Expressed in roots, leaves and flowers and, to a lower extent, in young seedlings.

Its subcellular location is the nucleus. The enzyme catalyses N(6)-methyl-L-lysyl-[histone] + S-adenosyl-L-methionine = N(6),N(6)-dimethyl-L-lysyl-[histone] + S-adenosyl-L-homocysteine + H(+). Functionally, histone methyltransferase. Dimethylates 'Lys-4' of histone H3 (H3K4me2). H3 'Lys-4' methylation represents a specific tag for epigenetic transcriptional activation. Methylates only a limited fraction of nucleosomes of target genes (e.g. NAP and XTH33). Involved in epigenetic regulation of the floral repressor FLC and FT to prevent the transition from vegetative to reproductive development. The polypeptide is Histone-lysine N-methyltransferase ATX2 (Arabidopsis thaliana (Mouse-ear cress)).